The primary structure comprises 280 residues: Adenosylcobinamide-GDP ribazoletransferase (280 aa).

6 helical membrane passes run 44–64 (GVGV…LFVL), 69–89 (STPL…TGAF), 111–131 (LVIM…MLAL), 135–155 (VALL…ALFV), 189–209 (ISVA…ALVI), and 226–246 (ALLQ…AVMA).

The protein belongs to the CobS family. Requires Mg(2+) as cofactor.

The protein resides in the cell inner membrane. It carries out the reaction alpha-ribazole + adenosylcob(III)inamide-GDP = adenosylcob(III)alamin + GMP + H(+). The catalysed reaction is alpha-ribazole 5'-phosphate + adenosylcob(III)inamide-GDP = adenosylcob(III)alamin 5'-phosphate + GMP + H(+). It functions in the pathway cofactor biosynthesis; adenosylcobalamin biosynthesis; adenosylcobalamin from cob(II)yrinate a,c-diamide: step 7/7. Its function is as follows. Joins adenosylcobinamide-GDP and alpha-ribazole to generate adenosylcobalamin (Ado-cobalamin). Also synthesizes adenosylcobalamin 5'-phosphate from adenosylcobinamide-GDP and alpha-ribazole 5'-phosphate. The polypeptide is Adenosylcobinamide-GDP ribazoletransferase (Albidiferax ferrireducens (strain ATCC BAA-621 / DSM 15236 / T118) (Rhodoferax ferrireducens)).